Consider the following 90-residue polypeptide: MIKNPFSGIILKEENKDNRGSAEFQVVSFTNRIRRLTSHLELHKKDYLSQRGLRKILGKRQRLLAYLSKKNRVRYKELIGRLDIRETKIR.

It belongs to the universal ribosomal protein uS15 family. Part of the 30S ribosomal subunit.

It localises to the plastid. It is found in the chloroplast. This is Small ribosomal subunit protein uS15c (rps15) from Panax ginseng (Korean ginseng).